A 157-amino-acid polypeptide reads, in one-letter code: Cytochrome P450 monooxygenase atG (157 aa).

Cysteine 97 provides a ligand contact to heme.

The protein belongs to the cytochrome P450 family. Heme serves as cofactor.

Its pathway is secondary metabolite biosynthesis. Cytochrome P450 monooxygenase; part of the gene cluster that mediates the biosynthesis of terreic acid, a quinone epoxide inhibitor of Bruton's tyrosine kinase (BTK). The first step of the pathway is the synthesis of 6-methylsalicylic acid (6-MSA) by the 6-methylsalicylic acid synthase atX. In the biosynthesis of 6-MSA, atX utilizes one acetyl-CoA and three malonyl-CoAs as its substrates and catalyzes a series of programmed reactions including Claisen condensation, reduction, aldol cyclization, and the hydrolytic cleavage that yields 6-MSA. The 6-methylsalicylate 1-monooxygenase atA then catalyzes the decarboxylative hydroxylation of 6-MSA to 3-methylcatechol. The next step is the conversion of 3-methylcatechol to 3-methyl-1,2,4-benzenetriol by cytochrome P450 monooxygenase atE, which is enhanced by cytochrome P450 monooxygenase atG. Then, the epoxidase atD catalyzes the epoxidation and hydroxyl oxidation of 3-methyl-1,2,4-benzenetriol to terremutin. Lastly, GMC oxidoreductase atC oxidizes terremutin to terreic acid. This chain is Cytochrome P450 monooxygenase atG, found in Aspergillus terreus (strain NIH 2624 / FGSC A1156).